The sequence spans 409 residues: Microfibrillar-associated protein 3-like (409 aa).

The signal sequence occupies residues 1–28 (MGLQKSHLTVCLPPSVPFLILVSTLATA). Topologically, residues 29-148 (KSVTNSTLNG…TLRVIFTSGD (120 aa)) are extracellular. 5 N-linked (GlcNAc...) asparagine glycosylation sites follow: asparagine 33, asparagine 37, asparagine 67, asparagine 111, and asparagine 135. The region spanning 47-141 (PVIIARTDHI…GTINNTVTLR (95 aa)) is the Ig-like C2-type domain. Cysteine 68 and cysteine 125 form a disulfide bridge. A helical transmembrane segment spans residues 149 to 169 (MGVYYMVVCLVAFTIVMILNI). The Cytoplasmic segment spans residues 170 to 409 (TRLCMMSSHL…NTCIIYESHV (240 aa)). The residue at position 287 (tyrosine 287) is a Phosphotyrosine. 4 positions are modified to phosphoserine: serine 298, serine 303, serine 306, and serine 307. The segment at 319–395 (VSVHPQSKRD…AHLETTEPAV (77 aa)) is disordered. Basic and acidic residues predominate over residues 325 to 340 (SKRDHVDDQEGGHFEV). Residues 356 to 373 (TAEPSTDITTTELTSEET) are compositionally biased toward low complexity.

The protein localises to the cell membrane. The protein resides in the nucleus. It localises to the cytoplasm. Functionally, may participate in the nuclear signaling of EGFR and MAPK1/ERK2. The protein is Microfibrillar-associated protein 3-like (Mfap3l) of Mus musculus (Mouse).